The sequence spans 184 residues: ADP-ribosylation factor 6 (184 aa).

Gly-2 carries N-myristoyl glycine lipidation. Residues 28–35, 71–75, and 130–133 contribute to the GTP site; these read GLDAAGKT, DVGGQ, and NKQD.

It belongs to the small GTPase superfamily. Arf family.

It localises to the cell membrane. Its function is as follows. GTP-binding protein that functions as a molecular switch for the activation of 'new end take off' (NETO), a process in which the directions of cell growth change from a monopolar manner to a bipolar manner in fission yeast. Involved in supplying membrane to the growing new end. The polypeptide is ADP-ribosylation factor 6 (arf6) (Schizosaccharomyces pombe (strain 972 / ATCC 24843) (Fission yeast)).